Reading from the N-terminus, the 358-residue chain is tRNA-specific 2-thiouridylase MnmA (358 aa).

Residues 6-13 (LVSGGVDS) and Ile-32 contribute to the ATP site. An interaction with target base in tRNA region spans residues 93–95 (NPD). Cys-98 functions as the Nucleophile in the catalytic mechanism. Cysteines 98 and 193 form a disulfide. Gly-121 serves as a coordination point for ATP. The tract at residues 143–145 (KDQ) is interaction with tRNA. The Cysteine persulfide intermediate role is filled by Cys-193.

The protein belongs to the MnmA/TRMU family.

It is found in the cytoplasm. It catalyses the reaction S-sulfanyl-L-cysteinyl-[protein] + uridine(34) in tRNA + AH2 + ATP = 2-thiouridine(34) in tRNA + L-cysteinyl-[protein] + A + AMP + diphosphate + H(+). Catalyzes the 2-thiolation of uridine at the wobble position (U34) of tRNA, leading to the formation of s(2)U34. This is tRNA-specific 2-thiouridylase MnmA from Parabacteroides distasonis (strain ATCC 8503 / DSM 20701 / CIP 104284 / JCM 5825 / NCTC 11152).